The following is a 725-amino-acid chain: Eukaryotic translation initiation factor 3 subunit B (725 aa).

Serine 23 carries the post-translational modification Phosphoserine. Positions 39–129 (TVVVIEGAPV…HTFVVRKLNQ (91 aa)) constitute an RRM domain. Serine 135 carries the post-translational modification Phosphoserine. A Phosphothreonine modification is found at threonine 136. WD repeat units lie at residues 190–229 (DREN…MCAR), 304–344 (DGKK…LVDK), and 347–386 (IKID…QPAR). Residues 630-671 (LTKEDMKKIRKKLKDYNRLFDEEDIAEQSSANRELAARRRQL) are a coiled coil.

Belongs to the eIF-3 subunit B family. As to quaternary structure, component of the eukaryotic translation initiation factor 3 (eIF-3) complex. The eIF-3 complex appears to include tif32/eif3a, SPAC25G10.08/eif3b, tif33/eif3c, SPBC4C3.07/eif3f, tif35/eif3g and sum1/eif3i. This set of common subunits may also associate exclusively with either moe1/eif3d and int6/eif3e, or with SPAC821.05/eif3h and SPAC1751.03/eif3m. The eIF-3 complex may also include SPAC3A12.13c/eif3j.

It localises to the cytoplasm. RNA-binding component of the eukaryotic translation initiation factor 3 (eIF-3) complex, which is involved in protein synthesis of a specialized repertoire of mRNAs and, together with other initiation factors, stimulates binding of mRNA and methionyl-tRNAi to the 40S ribosome. The eIF-3 complex specifically targets and initiates translation of a subset of mRNAs involved in cell proliferation. This chain is Eukaryotic translation initiation factor 3 subunit B, found in Schizosaccharomyces pombe (strain 972 / ATCC 24843) (Fission yeast).